The sequence spans 127 residues: Large ribosomal subunit protein bL12 (127 aa).

The protein belongs to the bacterial ribosomal protein bL12 family. Homodimer. Part of the ribosomal stalk of the 50S ribosomal subunit. Forms a multimeric L10(L12)X complex, where L10 forms an elongated spine to which 2 to 4 L12 dimers bind in a sequential fashion. Binds GTP-bound translation factors.

Functionally, forms part of the ribosomal stalk which helps the ribosome interact with GTP-bound translation factors. Is thus essential for accurate translation. In Rhizobium etli (strain CIAT 652), this protein is Large ribosomal subunit protein bL12.